We begin with the raw amino-acid sequence, 176 residues long: MELVVGRVVKSHGVTGEVVVEIRTDDPADRFAPGTRLRAKGPFDGGAEGSAVSYVIESVRQHGGRLLVRLAGVADRDAADALRGSLFVIDADDLPPIDEPDTYYDHQLVGLMVQTATGEGVGVVTEVVHTAAGELLAVKRDSDEVLVPFVRAIVTSVSLDDGIVEIDPPHGLLNLE.

The PRC barrel domain occupies 100-172 (PDTYYDHQLV…IVEIDPPHGL (73 aa)).

The protein belongs to the RimM family. Binds ribosomal protein uS19.

The protein resides in the cytoplasm. In terms of biological role, an accessory protein needed during the final step in the assembly of 30S ribosomal subunit, possibly for assembly of the head region. Essential for efficient processing of 16S rRNA. May be needed both before and after RbfA during the maturation of 16S rRNA. It has affinity for free ribosomal 30S subunits but not for 70S ribosomes. This Mycobacterium bovis (strain ATCC BAA-935 / AF2122/97) protein is Ribosome maturation factor RimM.